The chain runs to 1404 residues: DNA-directed RNA polymerase subunit beta' (1404 aa).

Residues Cys-70, Cys-72, Cys-85, and Cys-88 each contribute to the Zn(2+) site. Asp-460, Asp-462, and Asp-464 together coordinate Mg(2+). The Zn(2+) site is built by Cys-814, Cys-889, Cys-896, and Cys-899. The segment at 1377-1404 is disordered; the sequence is DSEMETLSGKPAAAEPVAAVADAGADEE. A compositionally biased stretch (low complexity) spans 1387-1404; sequence PAAAEPVAAVADAGADEE.

This sequence belongs to the RNA polymerase beta' chain family. In terms of assembly, the RNAP catalytic core consists of 2 alpha, 1 beta, 1 beta' and 1 omega subunit. When a sigma factor is associated with the core the holoenzyme is formed, which can initiate transcription. The cofactor is Mg(2+). It depends on Zn(2+) as a cofactor.

The catalysed reaction is RNA(n) + a ribonucleoside 5'-triphosphate = RNA(n+1) + diphosphate. DNA-dependent RNA polymerase catalyzes the transcription of DNA into RNA using the four ribonucleoside triphosphates as substrates. The protein is DNA-directed RNA polymerase subunit beta' of Xanthomonas euvesicatoria pv. vesicatoria (strain 85-10) (Xanthomonas campestris pv. vesicatoria).